Here is a 185-residue protein sequence, read N- to C-terminus: Movement protein P1 (185 aa).

Transports viral genome to neighboring plant cells directly through plasmosdesmata, without any budding. The movement protein allows efficient cell to cell propagation, by bypassing the host cell wall barrier (Potential). Likely acts as a suppressor of RNA-mediated gene silencing, also known as post-transcriptional gene silencing (PTGS), a mechanism of plant viral defense that performs sequence-specific inhibition of viral mRNAs expression. The chain is Movement protein P1 from Glycine max (Soybean).